Reading from the N-terminus, the 138-residue chain is Extracellular glycoprotein lacritin (138 aa).

The N-terminal stretch at 1 to 19 is a signal peptide; the sequence is MKFTTLLFLAAVAGALVYA. The disordered stretch occupies residues 20 to 79; the sequence is EDASSDSTGADPAQEAGTSKPNEEISGPAEPASPPETTTTAQETSAAAVQGTAKVTSSRQ. The span at 43–67 shows a compositional bias: low complexity; that stretch reads EISGPAEPASPPETTTTAQETSAAA. Asn-119 carries an N-linked (GlcNAc...) asparagine glycan.

As to expression, expressed in secretory granules of many acinar cells in lacrimal gland and in scattered acinar cells of salivary glands.

The protein resides in the secreted. Modulates secretion by lacrimal acinar cells. The chain is Extracellular glycoprotein lacritin (LACRT) from Homo sapiens (Human).